Reading from the N-terminus, the 207-residue chain is Fibronectin type III domain-containing protein 5b (207 aa).

Positions 1–26 are cleaved as a signal peptide; that stretch reads MWGIKGSFAVLLLLFLAYIFASSVNA. At 27–146 the chain is on the extracellular side; sequence DSLSAPLNVT…EEVGQAAQLR (120 aa). One can recognise a Fibronectin type-III domain in the interval 31-122; sequence APLNVTIKAL…EPVLFRTPKE (92 aa). Asparagine 34 and asparagine 79 each carry an N-linked (GlcNAc...) asparagine glycan. The chain crosses the membrane as a helical span at residues 147-167; sequence AGELIIIVVVLVMWAGVIALF. At 168-207 the chain is on the cytoplasmic side; sequence CRQYDIIKDNEPNNNKDKAKNSSECSTPEHPTGGLLRSKV. Residues 178-188 show a composition bias toward basic and acidic residues; the sequence is EPNNNKDKAKN. The tract at residues 178 to 207 is disordered; that stretch reads EPNNNKDKAKNSSECSTPEHPTGGLLRSKV. The Microbody targeting signal motif lies at 205-207; it reads SKV.

Dimer; may exist in other oligomeric forms. The extracellular domain is cleaved and released from the cell membrane.

The protein resides in the cell membrane. It is found in the peroxisome membrane. The protein localises to the secreted. May mediate beneficial effects of muscular exercise. This Danio rerio (Zebrafish) protein is Fibronectin type III domain-containing protein 5b (fndc5b).